Consider the following 97-residue polypeptide: Co-chaperonin GroES (97 aa).

The protein belongs to the GroES chaperonin family. As to quaternary structure, heptamer of 7 subunits arranged in a ring. Interacts with the chaperonin GroEL.

The protein localises to the cytoplasm. Together with the chaperonin GroEL, plays an essential role in assisting protein folding. The GroEL-GroES system forms a nano-cage that allows encapsulation of the non-native substrate proteins and provides a physical environment optimized to promote and accelerate protein folding. GroES binds to the apical surface of the GroEL ring, thereby capping the opening of the GroEL channel. The sequence is that of Co-chaperonin GroES from Buchnera aphidicola subsp. Baizongia pistaciae (strain Bp).